The following is a 488-amino-acid chain: Putative BPI/LBP family protein At1g04970 (488 aa).

The first 24 residues, 1-24, serve as a signal peptide directing secretion; the sequence is MDVGRCFLFLLLPSFFFLPSQTQS. Asn-79, Asn-109, Asn-231, Asn-242, and Asn-341 each carry an N-linked (GlcNAc...) asparagine glycan.

Belongs to the BPI/LBP/Plunc superfamily. BPI/LBP (TC 1.C.40) family.

This is Putative BPI/LBP family protein At1g04970 from Arabidopsis thaliana (Mouse-ear cress).